Consider the following 148-residue polypeptide: Large ribosomal subunit protein bL9 (148 aa).

It belongs to the bacterial ribosomal protein bL9 family.

Functionally, binds to the 23S rRNA. The chain is Large ribosomal subunit protein bL9 from Prosthecochloris aestuarii (strain DSM 271 / SK 413).